Here is a 379-residue protein sequence, read N- to C-terminus: Cathepsin B-like cysteine proteinase 6 (379 aa).

Positions 1–16 (MKTLLFLSCIVVAAYC) are cleaved as a signal peptide. A propeptide spanning residues 17-104 (ACNDNLESVL…LSKTKDLDLD (88 aa)) is cleaved from the precursor. 6 disulfides stabilise this stretch: cysteine 118–cysteine 147, cysteine 130–cysteine 174, cysteine 166–cysteine 233, cysteine 167–cysteine 170, cysteine 203–cysteine 237, and cysteine 211–cysteine 223. Residue cysteine 133 is part of the active site. N-linked (GlcNAc...) asparagine glycosylation occurs at asparagine 196. A glycan (N-linked (GlcNAc...) asparagine; atypical) is linked at asparagine 201. Residues histidine 305 and asparagine 325 contribute to the active site.

This sequence belongs to the peptidase C1 family.

The protein is Cathepsin B-like cysteine proteinase 6 (cpr-6) of Caenorhabditis elegans.